Consider the following 240-residue polypeptide: 1-(5-phosphoribosyl)-5-[(5-phosphoribosylamino)methylideneamino] imidazole-4-carboxamide isomerase (240 aa).

The Proton acceptor role is filled by Asp-10. Asp-131 (proton donor) is an active-site residue.

The protein belongs to the HisA/HisF family.

The protein localises to the cytoplasm. The catalysed reaction is 1-(5-phospho-beta-D-ribosyl)-5-[(5-phospho-beta-D-ribosylamino)methylideneamino]imidazole-4-carboxamide = 5-[(5-phospho-1-deoxy-D-ribulos-1-ylimino)methylamino]-1-(5-phospho-beta-D-ribosyl)imidazole-4-carboxamide. Its pathway is amino-acid biosynthesis; L-histidine biosynthesis; L-histidine from 5-phospho-alpha-D-ribose 1-diphosphate: step 4/9. The protein is 1-(5-phosphoribosyl)-5-[(5-phosphoribosylamino)methylideneamino] imidazole-4-carboxamide isomerase of Shouchella clausii (strain KSM-K16) (Alkalihalobacillus clausii).